The sequence spans 386 residues: Succinate--CoA ligase [ADP-forming] subunit beta (386 aa).

One can recognise an ATP-grasp domain in the interval 9–244 (KELLKQFGVT…LDEEDPAEIE (236 aa)). ATP is bound by residues K46, 53-55 (GRG), E99, A102, and E107. Residues N199 and D213 each coordinate Mg(2+). Substrate is bound by residues N264 and 321–323 (GIM).

The protein belongs to the succinate/malate CoA ligase beta subunit family. Heterotetramer of two alpha and two beta subunits. Mg(2+) is required as a cofactor.

The enzyme catalyses succinate + ATP + CoA = succinyl-CoA + ADP + phosphate. It carries out the reaction GTP + succinate + CoA = succinyl-CoA + GDP + phosphate. Its pathway is carbohydrate metabolism; tricarboxylic acid cycle; succinate from succinyl-CoA (ligase route): step 1/1. Succinyl-CoA synthetase functions in the citric acid cycle (TCA), coupling the hydrolysis of succinyl-CoA to the synthesis of either ATP or GTP and thus represents the only step of substrate-level phosphorylation in the TCA. The beta subunit provides nucleotide specificity of the enzyme and binds the substrate succinate, while the binding sites for coenzyme A and phosphate are found in the alpha subunit. In Bordetella pertussis (strain Tohama I / ATCC BAA-589 / NCTC 13251), this protein is Succinate--CoA ligase [ADP-forming] subunit beta.